We begin with the raw amino-acid sequence, 435 residues long: Aspartate--tRNA(Asp/Asn) ligase (435 aa).

Position 163 (glutamate 163) interacts with L-aspartate. Residues glutamine 185–lysine 188 form an aspartate region. An L-aspartate-binding site is contributed by arginine 206. Residues arginine 206–glutamate 208, arginine 214–leucine 216, and glutamate 358 contribute to the ATP site. L-aspartate contacts are provided by serine 361 and arginine 365. Residue glycine 406–arginine 409 coordinates ATP.

It belongs to the class-II aminoacyl-tRNA synthetase family. Type 2 subfamily. As to quaternary structure, homodimer.

The protein localises to the cytoplasm. It catalyses the reaction tRNA(Asx) + L-aspartate + ATP = L-aspartyl-tRNA(Asx) + AMP + diphosphate. Aspartyl-tRNA synthetase with relaxed tRNA specificity since it is able to aspartylate not only its cognate tRNA(Asp) but also tRNA(Asn). Reaction proceeds in two steps: L-aspartate is first activated by ATP to form Asp-AMP and then transferred to the acceptor end of tRNA(Asp/Asn). Is slightly more efficient at aminoacylating tRNA(Asn) over tRNA(Asp). The sequence is that of Aspartate--tRNA(Asp/Asn) ligase (aspS2) from Deinococcus radiodurans (strain ATCC 13939 / DSM 20539 / JCM 16871 / CCUG 27074 / LMG 4051 / NBRC 15346 / NCIMB 9279 / VKM B-1422 / R1).